The sequence spans 287 residues: X-box-binding protein 1 (287 aa).

The region spanning 61 to 117 is the bZIP domain; the sequence is EEKMDRRKLKNRVAAQNARDKKKERSAKIEDVMRDLVEENRRLRAENERLRRQNKNL. Residues 63-87 are disordered; the sequence is KMDRRKLKNRVAAQNARDKKKERSA. The segment at 63–88 is basic motif; sequence KMDRRKLKNRVAAQNARDKKKERSAK. The span at 78-87 shows a compositional bias: basic and acidic residues; it reads ARDKKKERSA. The interval 89-117 is leucine-zipper; sequence IEDVMRDLVEENRRLRAENERLRRQNKNL.

In terms of assembly, interacts with SUMO-conjugating enzyme ubc-9; the interaction is direct. Post-translationally, sumoylated. Sumoylation may negatively modulate the transcription of genes involved in the ER-stress-response.

The protein localises to the nucleus. Functionally, required for transcriptional regulation of the unfolded protein response (UPR) in the endoplasmic reticulum (ER) under stressed conditions, acting downstream of ire-1, and also maintaining ER homeostasis via a negative feedback loop, in parallel with ER kinase pek-1. May also regulate Golgi protein trafficking distal to the ER. Protects the host organism from the detrimental effects of mounting an innate immune response to microbes, such as the Gram-negative bacterium P.aeruginosa, probably by modulating the UPR. In terms of biological role, plays a role in the unconventional cytoplasmic splicing processing of its own mRNA triggered by the endoplasmic reticulum (ER) transmembrane endoribonuclease ire-1: upon ER stress, the emerging xbp-1 polypeptide chain, as part of a mRNA-ribosome-nascent chain (R-RNC) complex, cotranslationally recruits its own unprocessed mRNA through transient docking to the ER membrane and translational pausing, therefore facilitating efficient ire-1-mediated xbp-1 mRNA isoform 2 production. Its function is as follows. Functions as a stress-inducible potent transcriptional activator during endoplasmic reticulum (ER) stress by inducing unfolded protein response (UPR) target genes via binding to the UPR element (UPRE). Plays a role in modulation of the UPR, lipid metabolism, proteostasis, and lifespan. In neurons, rescues stress resistance, increases longevity, and, drives expression of lysosomal genes in the intestine and activates the UPR in distal, non-neuronal cell types through a cell-nonautonomous mechanism. In neurons or intestine, plays a role in protection against proteotoxicity, acting via positive modulation of genes involved in lysosomal function, including lipases and the fatty-acid desaturase fat-6. Protection against proteotoxicity in neurons is dependent upon the transcription factor atf-6. This is X-box-binding protein 1 from Caenorhabditis elegans.